The sequence spans 83 residues: Short neurotoxin 3FTx-Oxy4 (83 aa).

The first 21 residues, 1 to 21 (MKTLLLTLVVVTIVCLDLGYT), serve as a signal peptide directing secretion. Intrachain disulfides connect cysteine 24–cysteine 45, cysteine 38–cysteine 62, cysteine 64–cysteine 75, and cysteine 76–cysteine 81.

This sequence belongs to the three-finger toxin family. Short-chain subfamily. Type I alpha-neurotoxin sub-subfamily. Expressed by the venom gland.

It is found in the secreted. Functionally, binds to muscle nicotinic acetylcholine receptor (nAChR) and inhibit acetylcholine from binding to the receptor, thereby impairing neuromuscular transmission. The chain is Short neurotoxin 3FTx-Oxy4 from Oxyuranus microlepidotus (Inland taipan).